Consider the following 162-residue polypeptide: Disulfide bond formation protein B (162 aa).

At 1–10 (MGDWLLRRRG) the chain is on the cytoplasmic side. The helical transmembrane segment at 11-27 (LALLLVLTLLLNLGALG) threads the bilayer. Over 28–45 (LEYLADMPPCPLCWVQRG) the chain is Periplasmic. C37 and C40 are disulfide-bonded. The chain crosses the membrane as a helical span at residues 46–62 (VFGLMSLVALVGLVYFP). At 63-68 (RGWGRW) the chain is on the cytoplasmic side. A helical transmembrane segment spans residues 69–86 (PLAGALGLSALTGVIIAL). The Periplasmic segment spans residues 87-140 (RHLYIQANPDAVSCGMSPEVLAQFLPWWEVLLEILSGTTDCTQVDAVLGVPLPG). C100 and C127 are joined by a disulfide. The chain crosses the membrane as a helical span at residues 141–159 (WTLVGYLALGALGLYAVLA). Over 160-162 (RRA) the chain is Cytoplasmic.

Belongs to the DsbB family.

Its subcellular location is the cell inner membrane. In terms of biological role, required for disulfide bond formation in some periplasmic proteins. Acts by oxidizing the DsbA protein. In Alkalilimnicola ehrlichii (strain ATCC BAA-1101 / DSM 17681 / MLHE-1), this protein is Disulfide bond formation protein B.